The following is a 314-amino-acid chain: 4-hydroxy-3-methylbut-2-enyl diphosphate reductase (314 aa).

Residue Cys-12 coordinates [4Fe-4S] cluster. (2E)-4-hydroxy-3-methylbut-2-enyl diphosphate-binding residues include His-41 and His-74. Dimethylallyl diphosphate contacts are provided by His-41 and His-74. Residues His-41 and His-74 each coordinate isopentenyl diphosphate. Residue Cys-96 participates in [4Fe-4S] cluster binding. Position 124 (His-124) interacts with (2E)-4-hydroxy-3-methylbut-2-enyl diphosphate. His-124 contributes to the dimethylallyl diphosphate binding site. Residue His-124 participates in isopentenyl diphosphate binding. Residue Glu-126 is the Proton donor of the active site. Residue Thr-167 participates in (2E)-4-hydroxy-3-methylbut-2-enyl diphosphate binding. Cys-197 serves as a coordination point for [4Fe-4S] cluster. (2E)-4-hydroxy-3-methylbut-2-enyl diphosphate is bound by residues Ser-225, Ser-226, Asn-227, and Ser-269. 4 residues coordinate dimethylallyl diphosphate: Ser-225, Ser-226, Asn-227, and Ser-269. 4 residues coordinate isopentenyl diphosphate: Ser-225, Ser-226, Asn-227, and Ser-269.

The protein belongs to the IspH family. The cofactor is [4Fe-4S] cluster.

The catalysed reaction is isopentenyl diphosphate + 2 oxidized [2Fe-2S]-[ferredoxin] + H2O = (2E)-4-hydroxy-3-methylbut-2-enyl diphosphate + 2 reduced [2Fe-2S]-[ferredoxin] + 2 H(+). The enzyme catalyses dimethylallyl diphosphate + 2 oxidized [2Fe-2S]-[ferredoxin] + H2O = (2E)-4-hydroxy-3-methylbut-2-enyl diphosphate + 2 reduced [2Fe-2S]-[ferredoxin] + 2 H(+). Its pathway is isoprenoid biosynthesis; dimethylallyl diphosphate biosynthesis; dimethylallyl diphosphate from (2E)-4-hydroxy-3-methylbutenyl diphosphate: step 1/1. It participates in isoprenoid biosynthesis; isopentenyl diphosphate biosynthesis via DXP pathway; isopentenyl diphosphate from 1-deoxy-D-xylulose 5-phosphate: step 6/6. In terms of biological role, catalyzes the conversion of 1-hydroxy-2-methyl-2-(E)-butenyl 4-diphosphate (HMBPP) into a mixture of isopentenyl diphosphate (IPP) and dimethylallyl diphosphate (DMAPP). Acts in the terminal step of the DOXP/MEP pathway for isoprenoid precursor biosynthesis. This chain is 4-hydroxy-3-methylbut-2-enyl diphosphate reductase, found in Idiomarina loihiensis (strain ATCC BAA-735 / DSM 15497 / L2-TR).